A 94-amino-acid chain; its full sequence is Co-chaperonin GroES (94 aa).

Belongs to the GroES chaperonin family. Heptamer of 7 subunits arranged in a ring. Interacts with the chaperonin GroEL.

The protein resides in the cytoplasm. Together with the chaperonin GroEL, plays an essential role in assisting protein folding. The GroEL-GroES system forms a nano-cage that allows encapsulation of the non-native substrate proteins and provides a physical environment optimized to promote and accelerate protein folding. GroES binds to the apical surface of the GroEL ring, thereby capping the opening of the GroEL channel. This Bacillus sp. (strain PS3) protein is Co-chaperonin GroES.